An 80-amino-acid chain; its full sequence is Large ribosomal subunit protein uL29 (80 aa).

It belongs to the universal ribosomal protein uL29 family.

This is Large ribosomal subunit protein uL29 from Mycobacterium marinum (strain ATCC BAA-535 / M).